Reading from the N-terminus, the 403-residue chain is 3-oxoacyl-[acyl-carrier-protein] synthase 2 (403 aa).

The Ketosynthase family 3 (KS3) domain maps to V1 to K403. Catalysis depends on for beta-ketoacyl synthase activity residues C158, H297, and H334.

Belongs to the thiolase-like superfamily. Beta-ketoacyl-ACP synthases family.

The catalysed reaction is a fatty acyl-[ACP] + malonyl-[ACP] + H(+) = a 3-oxoacyl-[ACP] + holo-[ACP] + CO2. It carries out the reaction (9Z)-hexadecenoyl-[ACP] + malonyl-[ACP] + H(+) = 3-oxo-(11Z)-octadecenoyl-[ACP] + holo-[ACP] + CO2. The protein operates within lipid metabolism; fatty acid biosynthesis. Involved in the type II fatty acid elongation cycle. Catalyzes the elongation of a wide range of acyl-ACP by the addition of two carbons from malonyl-ACP to an acyl acceptor. Can efficiently catalyze the conversion of palmitoleoyl-ACP (cis-hexadec-9-enoyl-ACP) to cis-vaccenoyl-ACP (cis-octadec-11-enoyl-ACP), an essential step in the thermal regulation of fatty acid composition. This is 3-oxoacyl-[acyl-carrier-protein] synthase 2 (fabF) from Staphylococcus aureus.